We begin with the raw amino-acid sequence, 124 residues long: MRHYEIVFIVHPDQSEQVPAMIERYKSLVTSQGGQVHRVEDWGRRQMAYMIQKLAKAHYVCVNIECGKETLAELEHAFKFNDAVLRHLIVQTKKAETAPSPMMKEVQREEARKAAQTTTEGQAA.

The segment at 96–124 (ETAPSPMMKEVQREEARKAAQTTTEGQAA) is disordered. Residues 115-124 (AQTTTEGQAA) are compositionally biased toward polar residues.

The protein belongs to the bacterial ribosomal protein bS6 family.

Functionally, binds together with bS18 to 16S ribosomal RNA. The polypeptide is Small ribosomal subunit protein bS6 (Cupriavidus pinatubonensis (strain JMP 134 / LMG 1197) (Cupriavidus necator (strain JMP 134))).